Here is a 414-residue protein sequence, read N- to C-terminus: Gamma-glutamyl phosphate reductase (414 aa).

Belongs to the gamma-glutamyl phosphate reductase family.

The protein resides in the cytoplasm. It catalyses the reaction L-glutamate 5-semialdehyde + phosphate + NADP(+) = L-glutamyl 5-phosphate + NADPH + H(+). The protein operates within amino-acid biosynthesis; L-proline biosynthesis; L-glutamate 5-semialdehyde from L-glutamate: step 2/2. Functionally, catalyzes the NADPH-dependent reduction of L-glutamate 5-phosphate into L-glutamate 5-semialdehyde and phosphate. The product spontaneously undergoes cyclization to form 1-pyrroline-5-carboxylate. The protein is Gamma-glutamyl phosphate reductase of Xanthomonas oryzae pv. oryzae (strain MAFF 311018).